Here is a 967-residue protein sequence, read N- to C-terminus: Translation initiation factor IF-2 (967 aa).

Disordered regions lie at residues 201 to 320 (KPIV…PGFV) and 349 to 382 (LQGK…ELEA). Residues 233–248 (TGPTFSGQTIDLSQFN) are compositionally biased toward polar residues. Positions 256 to 272 (PNKGGAKPAGAGNNNNN) are enriched in low complexity. Residues 354–363 (NKSKAAKYRR) show a composition bias toward basic residues. Residues 364–382 (DKRDTHRQKSDDEQRELEA) are compositionally biased toward basic and acidic residues. In terms of domain architecture, tr-type G spans 465–635 (HRAPIVTVMG…LLEAEVLDLK (171 aa)). A G1 region spans residues 474-481 (GHVDHGKT). 474–481 (GHVDHGKT) lines the GTP pocket. Positions 499-503 (GITQH) are G2. The interval 521–524 (DTPG) is G3. GTP contacts are provided by residues 521 to 525 (DTPGH) and 575 to 578 (NKVD). The interval 575-578 (NKVD) is G4. The segment at 611–613 (SAK) is G5.

The protein belongs to the TRAFAC class translation factor GTPase superfamily. Classic translation factor GTPase family. IF-2 subfamily.

It localises to the cytoplasm. In terms of biological role, one of the essential components for the initiation of protein synthesis. Protects formylmethionyl-tRNA from spontaneous hydrolysis and promotes its binding to the 30S ribosomal subunits. Also involved in the hydrolysis of GTP during the formation of the 70S ribosomal complex. The sequence is that of Translation initiation factor IF-2 from Flavobacterium psychrophilum (strain ATCC 49511 / DSM 21280 / CIP 103535 / JIP02/86).